Consider the following 325-residue polypeptide: Tagatose 1,6-diphosphate aldolase 1 (325 aa).

This sequence belongs to the aldolase LacD family.

The catalysed reaction is D-tagatofuranose 1,6-bisphosphate = D-glyceraldehyde 3-phosphate + dihydroxyacetone phosphate. The protein operates within carbohydrate metabolism; D-tagatose 6-phosphate degradation; D-glyceraldehyde 3-phosphate and glycerone phosphate from D-tagatose 6-phosphate: step 2/2. The chain is Tagatose 1,6-diphosphate aldolase 1 from Streptococcus agalactiae serotype III (strain NEM316).